The chain runs to 115 residues: RPRSDDSLQTLSRLLEDEYGHYLPSDELNNEAEEMSPAASLPELNADQSDLELPWERESREIGGRPFRQEAVLARLLKDLSNNPLRFRGRSKKGPSRGCFGVKLDRIGAMSGLGC.

The disordered stretch occupies residues 24-49 (PSDELNNEAEEMSPAASLPELNADQS). Cys-99 and Cys-115 are joined by a disulfide.

Belongs to the natriuretic peptide family. CNP-115 is differentially processed to produce CNP-38 and CNP-39 in the heart and CNP-22 in the brain.

The protein localises to the secreted. Hormone which may be vasoactive and natriuretic. Has a cGMP-stimulating activity. The polypeptide is C-type natriuretic peptide prohormone (Scyliorhinus canicula (Small-spotted catshark)).